The primary structure comprises 170 residues: Crossover junction endodeoxyribonuclease RuvC (170 aa).

Catalysis depends on residues Asp-11, Glu-71, and Asp-143. Mg(2+) contacts are provided by Asp-11, Glu-71, and Asp-143.

The protein belongs to the RuvC family. Homodimer which binds Holliday junction (HJ) DNA. The HJ becomes 2-fold symmetrical on binding to RuvC with unstacked arms; it has a different conformation from HJ DNA in complex with RuvA. In the full resolvosome a probable DNA-RuvA(4)-RuvB(12)-RuvC(2) complex forms which resolves the HJ. Mg(2+) is required as a cofactor.

The protein resides in the cytoplasm. It catalyses the reaction Endonucleolytic cleavage at a junction such as a reciprocal single-stranded crossover between two homologous DNA duplexes (Holliday junction).. The RuvA-RuvB-RuvC complex processes Holliday junction (HJ) DNA during genetic recombination and DNA repair. Endonuclease that resolves HJ intermediates. Cleaves cruciform DNA by making single-stranded nicks across the HJ at symmetrical positions within the homologous arms, yielding a 5'-phosphate and a 3'-hydroxyl group; requires a central core of homology in the junction. The consensus cleavage sequence is 5'-(A/T)TT(C/G)-3'. Cleavage occurs on the 3'-side of the TT dinucleotide at the point of strand exchange. HJ branch migration catalyzed by RuvA-RuvB allows RuvC to scan DNA until it finds its consensus sequence, where it cleaves and resolves the cruciform DNA. The polypeptide is Crossover junction endodeoxyribonuclease RuvC (Agrobacterium fabrum (strain C58 / ATCC 33970) (Agrobacterium tumefaciens (strain C58))).